Here is a 1298-residue protein sequence, read N- to C-terminus: Activating molecule in BECN1-regulated autophagy protein 1 (1298 aa).

The segment at M1–A22 is interaction with DDB1. K45 participates in a covalent cross-link: Glycyl lysine isopeptide (Lys-Gly) (interchain with G-Cter in ubiquitin). 3 WD repeats span residues D51–S90, G93–F133, and D135–K175. S52 bears the Phosphoserine; by MTOR mark. Over residues I254–A266 the composition is skewed to polar residues. The tract at residues I254–T284 is disordered. Residues P268–P277 show a composition bias toward pro residues. The PxP motif 1 motif lies at P275–R281. The residue at position 328 (S328) is a Phosphoserine. The interval F343 to G413 is disordered. Polar residues predominate over residues Q354–N385. 2 positions are modified to phosphoserine: S394 and S443. Composition is skewed to polar residues over residues S458–T467, H547–S561, and N590–Q601. Disordered stretches follow at residues S458–S494, I538–S561, N590–R690, and R747–M796. 2 stretches are compositionally biased toward low complexity: residues V602–S614 and S628–S639. S635 and S639 each carry phosphoserine. The span at Y661–A674 shows a compositional bias: polar residues. Residue R747 is modified to Asymmetric dimethylarginine. Over residues T772 to D781 the composition is skewed to acidic residues. Residue S1043 is modified to Phosphoserine; by IKKA. The short motif at S1043–L1052 is the LIR element. Over residues H1060–T1075 the composition is skewed to polar residues. The disordered stretch occupies residues H1060 to D1079. Short sequence motifs (TQT motif) lie at residues T1104–T1106 and T1116–T1118. Disordered stretches follow at residues Q1112 to S1143, R1190 to L1214, and S1227 to R1298. The segment covering S1191–R1212 has biased composition (polar residues). Residue S1205 is modified to Phosphoserine. The PxP motif 2 motif lies at P1206–R1212.

The protein belongs to the WD repeat AMBRA1 family. Component of the DCX(AMBRA1) E3 ubiquitin ligase complex, also named CRL4(AMBRA1), at least composed of CUL4 (CUL4A or CUL4B), DDB1, AMBRA1 and RBX1. Interacts with BECN1. Probably forms a complex with BECN1 and PIK3C3. Interacts with BECN2. Interacts with BCL2; leading to prevent interaction with BCN1 and autophagy, interaction is disrupted upon autophagy induction. Interacts with ULK1. Interacts (via PxP motifs) with PPP2CA; enhancing interaction between PPP2CA and MYC or FOXO3. Forms a complex with PPP2CA and BECN1; AMBRA1 and BECN1 components of the complex regulate MYC stability via different pathways. Interacts (TQT motifs) with DYNLL1 and DYNLL2; tethering AMBRA1 and the BECN1-PIK3C3 complex in absence of autophagy. Interacts with TRAF6; interaction is required to mediate 'Lys-63'-linked ubiquitination of ULK1. Interacts with TRIM32; promoting activation of ULK1 by TRIM32 via unanchored 'Lys-63'-linked polyubiquitin chains. Interacts with PRKN. Interacts (via LIR motif) with LC3 (MAP1LC3A, MAP1LC3B or MAP1LC3C). Interacts with HUWE1. Interacts with PTK2/FAK. Interacts with SRC; required for SRC trafficking to autophagosomes. Phosphorylation at Ser-52 by MTOR inhibits its ability to regulate autophagy and mediate ubiquitination of ULK1. Phosphorylation by ULK1 in response to autophagy induction abolishes interaction with DYNLL1 and DYNLL2, releasing AMBRA1 from the cytoskeletal docking site to induce autophagosome nucleation. Phosphorylation by MTOR inhibits interaction with PPP2CA and subsequent dephosphorylation of MYC. Phosphorylation at Ser-1043 by CHUK/IKKA promotes its interaction with ATG8 family proteins GABARAP and MAP1LC3B and its mitophagic activity. Post-translationally, ubiquitinated by RNF2 via 'Lys-48'-linkage in unstressed cells, leading to its degradation by the proteasome. Induction of autophagy promotes stabilization via interaction with CUL4 (CUL4A or CUL4B) and DDB1. Upon prolonged starvation, ubiquitinated and degraded, terminating the autophagy response. In terms of processing, undergoes proteolytic processing by caspase-6 (CASP6), caspase-7 (CASP7) and caspase-8 (CASP8) during apoptosis, resulting in the dismantling of the autophagic machinery and the accomplishment of the programmed cell death program. Also cleaved by calpains during apoptosis, which mediate a complete proteolytic degradation.

Its subcellular location is the endoplasmic reticulum. The protein localises to the cytoplasm. The protein resides in the cytoskeleton. It localises to the cytoplasmic vesicle. It is found in the autophagosome. Its subcellular location is the mitochondrion. The protein localises to the cytosol. The protein resides in the nucleus. It localises to the cell junction. It is found in the focal adhesion. It functions in the pathway protein modification; protein ubiquitination. Its function is as follows. Substrate-recognition component of a DCX (DDB1-CUL4-X-box) E3 ubiquitin-protein ligase complex involved in cell cycle control and autophagy. The DCX(AMBRA1) complex specifically mediates the polyubiquitination of target proteins such as BECN1, CCND1, CCND2, CCND3, ELOC and ULK1. Acts as an upstream master regulator of the transition from G1 to S cell phase: AMBRA1 specifically recognizes and binds phosphorylated cyclin-D (CCND1, CCND2 and CCND3), leading to cyclin-D ubiquitination by the DCX(AMBRA1) complex and subsequent degradation. By controlling the transition from G1 to S phase and cyclin-D degradation, AMBRA1 acts as a tumor suppressor that promotes genomic integrity during DNA replication and counteracts developmental abnormalities and tumor growth. AMBRA1 also regulates the cell cycle by promoting MYC dephosphorylation and degradation independently of the DCX(AMBRA1) complex: acts via interaction with the catalytic subunit of protein phosphatase 2A (PPP2CA), which enhances interaction between PPP2CA and MYC, leading to MYC dephosphorylation and degradation. Acts as a regulator of Cul5-RING (CRL5) E3 ubiquitin-protein ligase complexes by mediating ubiquitination and degradation of Elongin-C (ELOC) component of CRL5 complexes. Acts as a key regulator of autophagy by modulating the BECN1-PIK3C3 complex: controls protein turnover during neuronal development, and regulates normal cell survival and proliferation. In normal conditions, AMBRA1 is tethered to the cytoskeleton via interaction with dyneins DYNLL1 and DYNLL2. Upon autophagy induction, AMBRA1 is released from the cytoskeletal docking site to induce autophagosome nucleation by mediating ubiquitination of proteins involved in autophagy. The DCX(AMBRA1) complex mediates 'Lys-63'-linked ubiquitination of BECN1, increasing the association between BECN1 and PIK3C3 to promote PIK3C3 activity. In collaboration with TRAF6, AMBRA1 mediates 'Lys-63'-linked ubiquitination of ULK1 following autophagy induction, promoting ULK1 stability and kinase activity. Also activates ULK1 via interaction with TRIM32: TRIM32 stimulates ULK1 through unanchored 'Lys-63'-linked polyubiquitin chains. Also acts as an activator of mitophagy via interaction with PRKN and LC3 proteins (MAP1LC3A, MAP1LC3B or MAP1LC3C); possibly by bringing damaged mitochondria onto autophagosomes. Also activates mitophagy by acting as a cofactor for HUWE1; acts by promoting HUWE1-mediated ubiquitination of MFN2. AMBRA1 is also involved in regulatory T-cells (Treg) differentiation by promoting FOXO3 dephosphorylation independently of the DCX(AMBRA1) complex: acts via interaction with PPP2CA, which enhances interaction between PPP2CA and FOXO3, leading to FOXO3 dephosphorylation and stabilization. May act as a regulator of intracellular trafficking, regulating the localization of active PTK2/FAK and SRC. Also involved in transcription regulation by acting as a scaffold for protein complexes at chromatin. The sequence is that of Activating molecule in BECN1-regulated autophagy protein 1 from Homo sapiens (Human).